The chain runs to 615 residues: Forkhead box protein O (615 aa).

Disordered regions lie at residues 39-77 (RARS…DSQQ), 182-205 (KSVR…RAKK), 217-269 (GLND…RLSP), 318-359 (FSAA…APGY), and 389-409 (NSVT…SDSL). Residue Thr-44 is modified to Phosphothreonine; by PKB/AKT1. Polar residues predominate over residues 63 to 77 (TKASNQQLAPGDSQQ). Ser-75 carries the phosphoserine modification. The segment at residues 95–201 (WGNLSYADLI…ETSRYEKRRG (107 aa)) is a DNA-binding region (fork-head). Phosphoserine; by PKB/AKT1 is present on Ser-190. Composition is skewed to polar residues over residues 221-230 (ATPSPSSSVS) and 256-265 (RASSNASSCG). Phosphoserine; by PKB/AKT1 is present on Ser-259. A phosphoserine mark is found at Ser-262, Ser-263, and Ser-268. Over residues 326 to 335 (SQPPPPPYQP) the composition is skewed to pro residues. Positions 336 to 351 (PQHQQAQQQQQQSPYA) are enriched in low complexity.

In terms of assembly, interacts with melt.

Its subcellular location is the cytoplasm. It localises to the nucleus. Its function is as follows. Transcription factor involved in the regulation of the insulin signaling pathway. Consistently activates both the downstream target Thor\d4EBP and the feedback control target InR. Involved in negative regulation of the cell cycle, modulating cell growth and proliferation. In response to cellular stresses, such as nutrient deprivation or increased levels of reactive oxygen species, foxo is activated and inhibits growth through the action of target genes such as Thor. Foxo activated in the adult fat body can regulate lifespan in adults; an insulin peptide itself may function as one secondary messenger of insulin-regulated aging. Also regulates Lip4, homolog of human acid lipases, thereby acting as a key modulator of lipid metabolism by insulin signaling and integrates insulin responses to glucose and lipid homeostasis. This chain is Forkhead box protein O, found in Drosophila erecta (Fruit fly).